Consider the following 399-residue polypeptide: Tetracycline resistance protein, class A (399 aa).

The next 12 membrane-spanning stretches (helical) occupy residues 7-29 (LIVI…PVLP), 44-66 (HYGI…LGAL), 73-95 (RPVL…TAPF), 99-121 (LYIG…AYIA), 133-155 (FGFM…GLMG), 160-182 (HAPF…FLLP), 203-225 (FRWA…MQLV), 245-267 (ATTI…AMIT), 279-298 (ALML…AFAT), 302-324 (MAFP…QAML), 336-358 (LQGS…FTAI), and 368-390 (GWAW…RGLW).

The protein belongs to the major facilitator superfamily. TCR/Tet family.

The protein resides in the cell inner membrane. In terms of biological role, resistance to tetracycline by an active tetracycline efflux. This is an energy-dependent process that decreases the accumulation of the antibiotic in whole cells. This protein functions as a metal-tetracycline/H(+) antiporter. In Escherichia coli, this protein is Tetracycline resistance protein, class A (tetA).